The primary structure comprises 519 residues: T-complex protein 1 subunit gamma (519 aa).

It belongs to the TCP-1 chaperonin family. In terms of assembly, component of the T-complex protein 1 (TCP1) complex.

It localises to the cytoplasm. Molecular chaperone; assists the folding of proteins upon ATP hydrolysis. The protein is T-complex protein 1 subunit gamma (CCT3) of Encephalitozoon cuniculi (strain GB-M1) (Microsporidian parasite).